A 418-amino-acid polypeptide reads, in one-letter code: uncharacterized protein (418 aa).

Disordered regions lie at residues 123–174 (KVKD…DSDK), 209–231 (FDKEEKEREKEKEKEKEKEEKEE), 258–302 (KDDN…DEEL), and 344–418 (KDAD…YFKK). Basic and acidic residues predominate over residues 136 to 154 (NKKDKKDKNKQNEEDHLII). Acidic residues predominate over residues 156–170 (DVIDEEIQEKEDNES). The segment covering 209 to 227 (FDKEEKEREKEKEKEKEKE) has biased composition (basic and acidic residues). Residues 266 to 293 (NQNQNQNQNNNNNNNNNNNNNNNNNNNN) are compositionally biased toward low complexity. Positions 344–356 (KDADDSDDFDEFN) are enriched in acidic residues. Positions 359–374 (DTESQLSKSKQKSPNV) are enriched in polar residues. The span at 375-390 (KKTTTTTTTSTSTSSR) shows a compositional bias: low complexity. The span at 391-401 (KQSKSKLKPKS) shows a compositional bias: basic residues.

This is an uncharacterized protein from Dictyostelium discoideum (Social amoeba).